We begin with the raw amino-acid sequence, 510 residues long: Beta-glucosidase 34 (510 aa).

The first 26 residues, 1 to 26 (MGNGGRCMVEVVILLVLMAMSQGCDA), serve as a signal peptide directing secretion. Asn-28 carries N-linked (GlcNAc...) asparagine glycosylation. Gln-52 lines the a beta-D-glucoside pocket. An N-linked (GlcNAc...) asparagine glycan is attached at Asn-120. Residues His-153 and 198-199 (NE) each bind a beta-D-glucoside. Glu-199 functions as the Proton donor in the catalytic mechanism. Cys-218 and Cys-226 are disulfide-bonded. Asn-279 and Asn-331 each carry an N-linked (GlcNAc...) asparagine glycan. Residue Tyr-342 participates in a beta-D-glucoside binding. Residue Asn-360 is glycosylated (N-linked (GlcNAc...) asparagine). A beta-D-glucoside is bound by residues Glu-415, Trp-465, 472 to 473 (EW), and Phe-481. Glu-415 acts as the Nucleophile in catalysis.

The protein belongs to the glycosyl hydrolase 1 family.

It carries out the reaction Hydrolysis of terminal, non-reducing beta-D-glucosyl residues with release of beta-D-glucose.. The sequence is that of Beta-glucosidase 34 (BGLU34) from Oryza sativa subsp. japonica (Rice).